A 202-amino-acid polypeptide reads, in one-letter code: Orotate phosphoribosyltransferase (202 aa).

Residues K93 and 113 to 121 (EDIITTGGS) each bind 5-phospho-alpha-D-ribose 1-diphosphate. Orotate contacts are provided by T117 and R145.

The protein belongs to the purine/pyrimidine phosphoribosyltransferase family. PyrE subfamily. In terms of assembly, homodimer. The cofactor is Mg(2+).

It carries out the reaction orotidine 5'-phosphate + diphosphate = orotate + 5-phospho-alpha-D-ribose 1-diphosphate. The protein operates within pyrimidine metabolism; UMP biosynthesis via de novo pathway; UMP from orotate: step 1/2. Catalyzes the transfer of a ribosyl phosphate group from 5-phosphoribose 1-diphosphate to orotate, leading to the formation of orotidine monophosphate (OMP). The protein is Orotate phosphoribosyltransferase of Campylobacter concisus (strain 13826).